A 335-amino-acid chain; its full sequence is Fructose-1,6-bisphosphatase class 1 (335 aa).

E94, D113, L115, and D116 together coordinate Mg(2+). Residues 116-119 (DGSS), N208, and K274 contribute to the substrate site. Residue E280 participates in Mg(2+) binding.

It belongs to the FBPase class 1 family. As to quaternary structure, homotetramer. It depends on Mg(2+) as a cofactor.

The protein localises to the cytoplasm. It carries out the reaction beta-D-fructose 1,6-bisphosphate + H2O = beta-D-fructose 6-phosphate + phosphate. It participates in carbohydrate biosynthesis; gluconeogenesis. The chain is Fructose-1,6-bisphosphatase class 1 from Polynucleobacter asymbioticus (strain DSM 18221 / CIP 109841 / QLW-P1DMWA-1) (Polynucleobacter necessarius subsp. asymbioticus).